Reading from the N-terminus, the 224-residue chain is Urease accessory protein UreF (224 aa).

The protein belongs to the UreF family. As to quaternary structure, ureD, UreF and UreG form a complex that acts as a GTP-hydrolysis-dependent molecular chaperone, activating the urease apoprotein by helping to assemble the nickel containing metallocenter of UreC. The UreE protein probably delivers the nickel.

It localises to the cytoplasm. Its function is as follows. Required for maturation of urease via the functional incorporation of the urease nickel metallocenter. The sequence is that of Urease accessory protein UreF from Escherichia coli O157:H7.